A 247-amino-acid chain; its full sequence is Peroxisomal membrane protein 11A (247 aa).

Over 1–83 (MDAFTRFTNQ…SIHATDLVPR (83 aa)) the chain is Cytoplasmic. The helical transmembrane segment at 84–105 (LCLTLANLNRVIYFICDTILWV) threads the bilayer. Residues 106–219 (RSVGLTSGIN…DQLGIYKSNP (114 aa)) lie on the Lumenal side of the membrane. The chain crosses the membrane as a helical span at residues 220 to 239 (GIIGLGGLVSSIAGMITVAY). The required for homodimerization, interaction with PEX11G, and peroxisomal localization stretch occupies residues 220–239 (GIIGLGGLVSSIAGMITVAY). Over 240-247 (PQMKLKTR) the chain is Cytoplasmic.

It belongs to the peroxin-11 family. As to quaternary structure, homodimer. Heterodimer with PEX11G. Probably interacts with COPB2 and COPA. Interacts with PEX19. Interacts with FIS1. Seems not to be N-glycosylated.

It is found in the peroxisome membrane. In terms of biological role, may be involved in peroxisomal proliferation and may regulate peroxisomes division. May mediate binding of coatomer proteins to the peroxisomal membrane. Promotes membrane protrusion and elongation on the peroxisomal surface. This is Peroxisomal membrane protein 11A (PEX11A) from Homo sapiens (Human).